Here is a 374-residue protein sequence, read N- to C-terminus: MPSLSEAYRAHPVHVNHKHPDFNSLQELPESYNWTHLDDHTLIDSNNIMKESTTTVPVIDLNDPNASKLIGLACKTWGVYQVMNHGIPLSLLEDIQWLGQTLFSLPSHQKHKATRSPDGVSGYGIARISSFFPKLMWYEGFTIVGSPLDHFRELWPQDYTRFCDIVVQYDETMKKLAGTLMCLMLDSLGITKEDIKWAGSKAQFEKACAALQLNSYPSCPDPDHAMGLAPHTDSTFLTILSQNDISGLQVNREGSGWITVPPLQGGLVVNVGDLFHILSNGLYPSVLHRVLVNRTRQRFSVAYLYGPPSNVEICPHAKLIGPTKPPLYRSVTWNEYLGTKAKHFNKALSSVRLCTPINGLFDVNDSNKNSVQVG.

One can recognise a Fe2OG dioxygenase domain in the interval 206-307; that stretch reads KACAALQLNS…RFSVAYLYGP (102 aa). Fe cation is bound by residues His231, Asp233, and His288. The active site involves Arg298. Arg298 lines the 2-oxoglutarate pocket.

Belongs to the iron/ascorbate-dependent oxidoreductase family. GA3OX subfamily. L-ascorbate serves as cofactor. The cofactor is Fe(2+). Expressed in radicles, roots, internodes, cotyledons, leaves and shoots. Barely detected in developing seeds. Not detected in flowers or young fruits.

The catalysed reaction is gibberellin A20 + 2-oxoglutarate + O2 = gibberellin A1 + succinate + CO2. It participates in plant hormone biosynthesis; gibberellin biosynthesis. Its function is as follows. Converts the inactive gibberellin (GA) precursors GA9 and GA20 in the bioactives gibberellins GA4 and GA1. Has a small activity on GA29, producing GA8. Unable to convert GA20 to GA5, GA5 to GA3 or GA12 to GA14. Involved in the production of bioactive GA for vegetative growth and development, but not for the 3-beta-hydroxylation of GA in developing seeds. The protein is Gibberellin 3-beta-dioxygenase 1 (LE) of Pisum sativum (Garden pea).